Reading from the N-terminus, the 100-residue chain is Large ribosomal subunit protein uL23 (100 aa).

The protein belongs to the universal ribosomal protein uL23 family. As to quaternary structure, part of the 50S ribosomal subunit. Contacts protein L29, and trigger factor when it is bound to the ribosome.

In terms of biological role, one of the early assembly proteins it binds 23S rRNA. One of the proteins that surrounds the polypeptide exit tunnel on the outside of the ribosome. Forms the main docking site for trigger factor binding to the ribosome. This Synechococcus sp. (strain RCC307) protein is Large ribosomal subunit protein uL23.